The primary structure comprises 307 residues: uncharacterized protein (307 aa).

This is an uncharacterized protein from Acanthamoeba polyphaga mimivirus (APMV).